The following is a 361-amino-acid chain: Phospho-N-acetylmuramoyl-pentapeptide-transferase (361 aa).

Helical transmembrane passes span Leu-28 to Leu-48, Thr-73 to Leu-93, Met-98 to Leu-118, Tyr-132 to Pro-152, Trp-168 to Ser-188, Gly-199 to Ser-219, Gly-235 to Trp-255, Val-263 to Ile-283, Ile-288 to Val-308, and Lys-338 to Leu-358.

The protein belongs to the glycosyltransferase 4 family. MraY subfamily. It depends on Mg(2+) as a cofactor.

It localises to the cell inner membrane. It carries out the reaction UDP-N-acetyl-alpha-D-muramoyl-L-alanyl-gamma-D-glutamyl-meso-2,6-diaminopimeloyl-D-alanyl-D-alanine + di-trans,octa-cis-undecaprenyl phosphate = di-trans,octa-cis-undecaprenyl diphospho-N-acetyl-alpha-D-muramoyl-L-alanyl-D-glutamyl-meso-2,6-diaminopimeloyl-D-alanyl-D-alanine + UMP. It participates in cell wall biogenesis; peptidoglycan biosynthesis. Functionally, catalyzes the initial step of the lipid cycle reactions in the biosynthesis of the cell wall peptidoglycan: transfers peptidoglycan precursor phospho-MurNAc-pentapeptide from UDP-MurNAc-pentapeptide onto the lipid carrier undecaprenyl phosphate, yielding undecaprenyl-pyrophosphoryl-MurNAc-pentapeptide, known as lipid I. The protein is Phospho-N-acetylmuramoyl-pentapeptide-transferase of Thermodesulfovibrio yellowstonii (strain ATCC 51303 / DSM 11347 / YP87).